The chain runs to 122 residues: Large ribosomal subunit protein uL14 (122 aa).

It belongs to the universal ribosomal protein uL14 family. In terms of assembly, part of the 50S ribosomal subunit. Forms a cluster with proteins L3 and L19. In the 70S ribosome, L14 and L19 interact and together make contacts with the 16S rRNA in bridges B5 and B8.

In terms of biological role, binds to 23S rRNA. Forms part of two intersubunit bridges in the 70S ribosome. This is Large ribosomal subunit protein uL14 from Desulfovibrio desulfuricans (strain ATCC 27774 / DSM 6949 / MB).